The primary structure comprises 197 residues: Phosphoheptose isomerase (197 aa).

The SIS domain maps to methionine 34–proline 192. Substrate-binding positions include asparagine 49–glycine 51, glutamine 62, asparagine 91–aspartate 92, serine 122, and histidine 172. Glutamine 62 serves as a coordination point for Zn(2+). 2 residues coordinate Zn(2+): histidine 172 and histidine 180.

This sequence belongs to the SIS family. GmhA subfamily. Homotetramer. The cofactor is Zn(2+).

It is found in the cytoplasm. It carries out the reaction 2 D-sedoheptulose 7-phosphate = D-glycero-alpha-D-manno-heptose 7-phosphate + D-glycero-beta-D-manno-heptose 7-phosphate. It functions in the pathway carbohydrate biosynthesis; D-glycero-D-manno-heptose 7-phosphate biosynthesis; D-glycero-alpha-D-manno-heptose 7-phosphate and D-glycero-beta-D-manno-heptose 7-phosphate from sedoheptulose 7-phosphate: step 1/1. Its function is as follows. Catalyzes the isomerization of sedoheptulose 7-phosphate in D-glycero-D-manno-heptose 7-phosphate. This Pseudoalteromonas atlantica (strain T6c / ATCC BAA-1087) protein is Phosphoheptose isomerase.